The following is a 545-amino-acid chain: Spermatogenesis-associated serine-rich protein 2 (545 aa).

The segment covering Lys-87–Pro-96 has biased composition (basic residues). The segment at Lys-87–Val-133 is disordered. Over residues Lys-97–Pro-107 the composition is skewed to low complexity. Residues Asp-108–Gly-126 are compositionally biased toward polar residues. Ser-142, Ser-145, and Ser-147 each carry phosphoserine. 2 disordered regions span residues Arg-202–Lys-232 and Val-390–Ser-545. Positions Ser-391–Pro-413 are enriched in low complexity. Polar residues predominate over residues Arg-455–Pro-464. Phosphoserine is present on Ser-520.

It belongs to the SPATS2 family. Detected in testis, in spermatocytes and round spermatids (at protein level). Highly expressed in testis, and detected at lower levels in brain, heart, thymus, skeletal muscle, ovary, stomach and lung.

The protein resides in the cytoplasm. This Mus musculus (Mouse) protein is Spermatogenesis-associated serine-rich protein 2 (Spats2).